A 245-amino-acid chain; its full sequence is Orotidine 5'-phosphate decarboxylase (245 aa).

Substrate-binding positions include D22, K44, 71–80 (DLKFHDIPNT), T131, R192, Q201, G221, and R222. The active-site Proton donor is the K73.

It belongs to the OMP decarboxylase family. Type 1 subfamily. In terms of assembly, homodimer.

It carries out the reaction orotidine 5'-phosphate + H(+) = UMP + CO2. The protein operates within pyrimidine metabolism; UMP biosynthesis via de novo pathway; UMP from orotate: step 2/2. Functionally, catalyzes the decarboxylation of orotidine 5'-monophosphate (OMP) to uridine 5'-monophosphate (UMP). The polypeptide is Orotidine 5'-phosphate decarboxylase (Escherichia coli O127:H6 (strain E2348/69 / EPEC)).